Reading from the N-terminus, the 454-residue chain is Venom prothrombin activator porpharin-D (454 aa).

Residues 1-20 (MAPQLLLCLILTFLWSLPEA) form the signal peptide. The propeptide occupies 21–40 (ESNVFLKSKEANRFLQRTKR). The Gla domain maps to 41–86 (SNSLFEEFRPGNIERECIEEKCSKEEAREIFKDNEKTEAFWNVYVD). 4-carboxyglutamate occurs at positions 46, 47, 54, 56, 59, 60, 65, 66, 69, and 75. C57 and C62 are oxidised to a cystine. Positions 86–122 (DGDQCSSNPCHYGGTCKDGIGSYTCTCLPNYEGKNCE) constitute an EGF-like 1; calcium-binding domain. 11 disulfide bridges follow: C90/C101, C95/C110, C112/C121, C129/C140, C136/C149, C151/C164, C172/C316, C216/C221, C236/C252, C364/C378, and C389/C417. A glycan (O-linked (Hex...) serine) is linked at S92. Residues 129 to 164 (CRFFNGNCWHFCKPVQNDTQCSCAESYRLGDDGHSC) form the EGF-like 2 domain. The propeptide at 182–209 (REASLPDFVQSQNATLLKKSDNPSPDIR) is activation peptide. The Peptidase S1 domain occupies 210-441 (IINGMDCKLG…FIPWIKAVMR (232 aa)). Active-site charge relay system residues include H251 and D296. S393 acts as the Charge relay system in catalysis.

The protein belongs to the peptidase S1 family. Snake venom subfamily. Heterodimer of a light chain and a heavy chain; disulfide-linked. In terms of processing, the vitamin K-dependent, enzymatic carboxylation of some glutamate residues allows the modified protein to bind calcium. Expressed by the venom gland.

It is found in the secreted. It carries out the reaction Selective cleavage of Arg-|-Thr and then Arg-|-Ile bonds in prothrombin to form thrombin.. In terms of biological role, snake prothrombin activator that attacks the hemostatic system of prey. This protein is functionally similar to blood coagulation factor Xa. In Pseudechis porphyriacus (Red-bellied black snake), this protein is Venom prothrombin activator porpharin-D.